The following is a 494-amino-acid chain: Bifunctional protein HldE (494 aa).

Residues 1 to 334 (MPTPILDFDA…RKILPHAYLA (334 aa)) are ribokinase. 209–212 (NRKE) provides a ligand contact to ATP. Residue aspartate 279 is part of the active site. Residues 362-494 (FTNGCFDILH…LVHRARGGAK (133 aa)) form a cytidylyltransferase region.

The protein in the N-terminal section; belongs to the carbohydrate kinase PfkB family. It in the C-terminal section; belongs to the cytidylyltransferase family. As to quaternary structure, homodimer.

It carries out the reaction D-glycero-beta-D-manno-heptose 7-phosphate + ATP = D-glycero-beta-D-manno-heptose 1,7-bisphosphate + ADP + H(+). The catalysed reaction is D-glycero-beta-D-manno-heptose 1-phosphate + ATP + H(+) = ADP-D-glycero-beta-D-manno-heptose + diphosphate. It participates in nucleotide-sugar biosynthesis; ADP-L-glycero-beta-D-manno-heptose biosynthesis; ADP-L-glycero-beta-D-manno-heptose from D-glycero-beta-D-manno-heptose 7-phosphate: step 1/4. It functions in the pathway nucleotide-sugar biosynthesis; ADP-L-glycero-beta-D-manno-heptose biosynthesis; ADP-L-glycero-beta-D-manno-heptose from D-glycero-beta-D-manno-heptose 7-phosphate: step 3/4. Its function is as follows. Catalyzes the phosphorylation of D-glycero-D-manno-heptose 7-phosphate at the C-1 position to selectively form D-glycero-beta-D-manno-heptose-1,7-bisphosphate. Catalyzes the ADP transfer from ATP to D-glycero-beta-D-manno-heptose 1-phosphate, yielding ADP-D-glycero-beta-D-manno-heptose. The protein is Bifunctional protein HldE of Bradyrhizobium diazoefficiens (strain JCM 10833 / BCRC 13528 / IAM 13628 / NBRC 14792 / USDA 110).